The chain runs to 88 residues: Large ribosomal subunit protein bL27 (88 aa).

Residues 1 to 21 (MAHKKAGGSSRNGRDSDGRRL) form a disordered region.

The protein belongs to the bacterial ribosomal protein bL27 family.

The polypeptide is Large ribosomal subunit protein bL27 (Methylobacterium nodulans (strain LMG 21967 / CNCM I-2342 / ORS 2060)).